Consider the following 327-residue polypeptide: Phenylalanine--tRNA ligase alpha subunit (327 aa).

E252 is a Mg(2+) binding site.

This sequence belongs to the class-II aminoacyl-tRNA synthetase family. Phe-tRNA synthetase alpha subunit type 1 subfamily. In terms of assembly, tetramer of two alpha and two beta subunits. Mg(2+) is required as a cofactor.

The protein localises to the cytoplasm. It catalyses the reaction tRNA(Phe) + L-phenylalanine + ATP = L-phenylalanyl-tRNA(Phe) + AMP + diphosphate + H(+). This Hamiltonella defensa subsp. Acyrthosiphon pisum (strain 5AT) protein is Phenylalanine--tRNA ligase alpha subunit.